Reading from the N-terminus, the 177-residue chain is MGELHSVASAVTAVAAEAAEEGGKQNNFLIPNGTFFVVLAIFLIVLAVIGTFVVPPIQKVLKAREDMVTKTAEDNRNAAEQFTAAEADYKDELAKARGAATAVRDEARAEGRGILEDMRQRANAEATAVTETAAAELARQGEVTAGELATNVDSLSRTLAERVLGVSLSEPANAGRG.

The chain crosses the membrane as a helical span at residues 35 to 55 (FFVVLAIFLIVLAVIGTFVVP).

It belongs to the ATPase B chain family. F-type ATPases have 2 components, F(1) - the catalytic core - and F(0) - the membrane proton channel. F(1) has five subunits: alpha(3), beta(3), gamma(1), delta(1), epsilon(1). F(0) has three main subunits: a(1), b(2) and c(10-14). The alpha and beta chains form an alternating ring which encloses part of the gamma chain. F(1) is attached to F(0) by a central stalk formed by the gamma and epsilon chains, while a peripheral stalk is formed by the delta and b chains.

Its subcellular location is the cell membrane. F(1)F(0) ATP synthase produces ATP from ADP in the presence of a proton or sodium gradient. F-type ATPases consist of two structural domains, F(1) containing the extramembraneous catalytic core and F(0) containing the membrane proton channel, linked together by a central stalk and a peripheral stalk. During catalysis, ATP synthesis in the catalytic domain of F(1) is coupled via a rotary mechanism of the central stalk subunits to proton translocation. Functionally, component of the F(0) channel, it forms part of the peripheral stalk, linking F(1) to F(0). The chain is ATP synthase subunit b from Mycobacteroides abscessus (strain ATCC 19977 / DSM 44196 / CCUG 20993 / CIP 104536 / JCM 13569 / NCTC 13031 / TMC 1543 / L948) (Mycobacterium abscessus).